The primary structure comprises 281 residues: Shikimate dehydrogenase (NADP(+)) (281 aa).

Shikimate-binding positions include 14–16 and Thr61; that span reads SKS. Lys65 serves as the catalytic Proton acceptor. Residues Asn86 and Asp105 each contribute to the shikimate site. Residues 130–134, 154–159, and Met221 each bind NADP(+); these read GAGGA and NRTAAK. Position 223 (Tyr223) interacts with shikimate. An NADP(+)-binding site is contributed by Gly245.

Belongs to the shikimate dehydrogenase family. Homodimer.

It catalyses the reaction shikimate + NADP(+) = 3-dehydroshikimate + NADPH + H(+). The protein operates within metabolic intermediate biosynthesis; chorismate biosynthesis; chorismate from D-erythrose 4-phosphate and phosphoenolpyruvate: step 4/7. Its function is as follows. Involved in the biosynthesis of the chorismate, which leads to the biosynthesis of aromatic amino acids. Catalyzes the reversible NADPH linked reduction of 3-dehydroshikimate (DHSA) to yield shikimate (SA). This is Shikimate dehydrogenase (NADP(+)) from Azoarcus sp. (strain BH72).